The chain runs to 299 residues: Prolyl 4-hydroxylase 2 (299 aa).

Topologically, residues 1–5 (MSMSR) are cytoplasmic. The helical; Signal-anchor for type II membrane protein transmembrane segment at 6 to 26 (LGLLLFVAILLVLLQSSTCLI) threads the bilayer. Topologically, residues 27–299 (SSPSSIINPS…GNCRRSCKAC (273 aa)) are lumenal. The Fe2OG dioxygenase domain maps to 121–246 (NGEDLQVLRY…KWSATKWIHV (126 aa)). Fe cation-binding residues include His139 and Asp141. A glycan (N-linked (GlcNAc...) asparagine) is linked at Asn165. Residue His227 participates in Fe cation binding. Lys237 provides a ligand contact to 2-oxoglutarate. 2 N-linked (GlcNAc...) asparagine glycosylation sites follow: Asn258 and Asn263. A ShKT domain is found at 259–299 (CTDVNESCERWAVLGECGKNPEYMVGTPEIPGNCRRSCKAC). Cystine bridges form between Cys259/Cys299, Cys266/Cys292, and Cys275/Cys296.

The protein belongs to the P4HA family. Requires Fe(2+) as cofactor. L-ascorbate serves as cofactor. In terms of tissue distribution, expressed in epidermal root hair cells (trichoblasts).

The protein resides in the endoplasmic reticulum membrane. Its subcellular location is the golgi apparatus membrane. The enzyme catalyses L-prolyl-[collagen] + 2-oxoglutarate + O2 = trans-4-hydroxy-L-prolyl-[collagen] + succinate + CO2. Its function is as follows. Catalyzes the post-translational formation of 4-hydroxyproline in -Xaa-Pro-Gly- sequences in proline-rich peptide sequences of plant glycoproteins and other proteins. Hydroxyprolines are important constituent of many plant cell wall glycoproteins such as extensins, hydroxyproline-rich glycoproteins, lectins and arabinogalactan proteins. Possesses high affinity for leucine-rich repeat and proline-rich extensins of root cell walls that are essential for root hair development. Hydroxyprolines define the subsequent O-glycosylation sites by arabinosyltransferases which elongate the O-arabinosides on extensins. Has low affinity for the substrates tested in vitro. This chain is Prolyl 4-hydroxylase 2, found in Arabidopsis thaliana (Mouse-ear cress).